We begin with the raw amino-acid sequence, 485 residues long: MADSAVRVRIAPSPTGEPHVGTAYIALFNYLFAKKHGGKFILRIEDTDATRSTPEFEKKVLDALKWCGLEWSEGPDIGGPYGPYRQSDRKDIYKPYVEKIVANGHGFRCFCTPERLEQMREAQRAAGKPPKYDGLCLSLSAEEVTSRVDAGEPHVVRMKIPTEGSCKFRDGVYGDVEIPWEAVDMQVLLKADGMPTYHMANVVDDHLMKITHVARGEEWLASVPKHILIYQYLGLEPPVFMHLSLMRNADKSKLSKRKNPTSISYYTALGYLPEALMNFLGLFFIQIAEGEELLTMEELAEKFDPENLSKAGAIFDIQKLDWLNARWIREKLSEEEFAARVLAWAMDNERLKEGLKLSQTRISKLGELPDLAAFLFKSDLGLQPAAFAGVKASPEEMLKILNTVQPDLEKILEWNKDSIETELRASAERMGKKLKAVVAPLFVACSGSQRSLPLFDSMELLGRSVVRQRLKVAAQVVASMAGSGK.

Positions 12-22 (PSPTGEPHVGT) match the 'HIGH' region motif. Positions 253–257 (KLSKR) match the 'KMSKS' region motif. Lys256 is an ATP binding site.

Belongs to the class-I aminoacyl-tRNA synthetase family. Glutamate--tRNA ligase type 1 subfamily. As to quaternary structure, monomer.

Its subcellular location is the cytoplasm. It catalyses the reaction tRNA(Glu) + L-glutamate + ATP = L-glutamyl-tRNA(Glu) + AMP + diphosphate. Its function is as follows. Catalyzes the attachment of glutamate to tRNA(Glu) in a two-step reaction: glutamate is first activated by ATP to form Glu-AMP and then transferred to the acceptor end of tRNA(Glu). The sequence is that of Glutamate--tRNA ligase from Rhizobium meliloti (strain 1021) (Ensifer meliloti).